Reading from the N-terminus, the 343-residue chain is Anthranilate phosphoribosyltransferase (343 aa).

Residues Gly84, 87–88, Thr92, 94–97, 112–120, and Ser124 contribute to the 5-phospho-alpha-D-ribose 1-diphosphate site; these read GD, NIST, and KHGNRGVSS. Gly84 contributes to the anthranilate binding site. Ser96 provides a ligand contact to Mg(2+). Asn115 serves as a coordination point for anthranilate. Position 170 (Arg170) interacts with anthranilate. Residues Asp229 and Glu230 each contribute to the Mg(2+) site.

The protein belongs to the anthranilate phosphoribosyltransferase family. As to quaternary structure, homodimer. Mg(2+) is required as a cofactor.

The catalysed reaction is N-(5-phospho-beta-D-ribosyl)anthranilate + diphosphate = 5-phospho-alpha-D-ribose 1-diphosphate + anthranilate. It functions in the pathway amino-acid biosynthesis; L-tryptophan biosynthesis; L-tryptophan from chorismate: step 2/5. Functionally, catalyzes the transfer of the phosphoribosyl group of 5-phosphorylribose-1-pyrophosphate (PRPP) to anthranilate to yield N-(5'-phosphoribosyl)-anthranilate (PRA). The sequence is that of Anthranilate phosphoribosyltransferase from Burkholderia thailandensis (strain ATCC 700388 / DSM 13276 / CCUG 48851 / CIP 106301 / E264).